Here is a 1113-residue protein sequence, read N- to C-terminus: MLRGQTLPWRAALQQVSRPFIPRPLLAPSRYNVTARSILNASRLHRSLPTSRAFSSSSIRRREKPPPGDEKDDPAQKEQKDANEEKDVERAPDARRKAADPSGKQGSSHEPGAPTSGFARRKEKAGADKEQRGLEEDSKKDGNAVEGKGNSSDTPSPIPVNGGSDSRPSGANNGGNEDGGKKGKKGSGEKALQKPSVPEVYPQVMAIPIAKRPLFPGFYKAITIRDPNVAAAIQDMMKRGQPYVGAFLFKDENADGDVIENLDDVYDVGVFAQITAAYPLRGEASGVTAVLYPHRRIKVSSLLPPSDAAKAGTTDEKTSERRGDVVASFEEGTAELAPKDHYEPTSFLRKYPVSLVNVENLAEEPYDKKSAIIRAVTSEIVNVCKEIASLNPLFRDQISAFYTDQFPGNLSDEPAKLADFAAAVSAGELNEMQEVLELMNIEERLPKALVVLKKELMNAQLQSKISKDVEAKIQKRQREYWLMEQMKGIKRELGIESDGKDKLVEKFKEKAEKLAMPDAVKKVFDEELNKLAHLEPAASEFNVTRNYLDWLTQIPWGQKSVENFGIQHAVKVLDEDHYGLKDVKDRILEFIAVGKLRGTVEGKILCLVGPPGVGKTSIGKSIARALNRQYYRFSVGGLTDVAEIKGHRRTYVGALPGRIIQALKKCQTENPLILIDEIDKIGRGHQGDPSSALLELLDPEQNSSFLDHYMDVPVDLSKVLFVCTANVTDTIPRPLLDRMELIELSGYVADEKMAIAQRYLAPAARELTGLKEVDVNLTEEAVEELIKSYCRESGVRNLKKQIEKVYRKAAYKIVRDLGEDVLAEEKALTDEGKAVQEESQKETESPDSKSPVDPEKSTTETPRVALKVPESVQLSIGKDSLTDYVGPPIFTADRLYDTFPPGVTMGLAWTSMGGAALYVESILENALTPQSRPGIDITGNLQNVMKESSQIAYSFAKSVMAKQFPENRFFEKAKLHMHCPEGAVPKDGPSAGITMATSLLSLALNHPLDPTIAMTGELTVTGKVLRIGGLREKTVAARRAGAKKIVFPADNMSDWLELPENIKEGIEGHAVGWYSEVFDLLFTDLDKGAANHVWQKQLAEKPEKKSNEVEEDE.

Residues 1 to 61 constitute a mitochondrion transit peptide; the sequence is MLRGQTLPWR…RAFSSSSIRR (61 aa). Positions 42–196 are disordered; the sequence is SRLHRSLPTS…SGEKALQKPS (155 aa). Basic and acidic residues-rich tracts occupy residues 64-99, 124-143, and 178-192; these read KPPPGDEKDDPAQKEQKDANEEKDVERAPDARRKAA, KAGADKEQRGLEEDSKKDGN, and DGGKKGKKGSGEKAL. One can recognise a Lon N-terminal domain in the interval 204–456; that stretch reads VMAIPIAKRP…KALVVLKKEL (253 aa). 609-616 contacts ATP; it reads GPPGVGKT. The segment covering 828 to 858 has biased composition (basic and acidic residues); sequence LTDEGKAVQEESQKETESPDSKSPVDPEKST. The interval 828-864 is disordered; sequence LTDEGKAVQEESQKETESPDSKSPVDPEKSTTETPRV. Residues 898–1084 form the Lon proteolytic domain; it reads TFPPGVTMGL…SEVFDLLFTD (187 aa). Active-site residues include serine 990 and lysine 1033.

This sequence belongs to the peptidase S16 family. As to quaternary structure, homohexamer or homoheptamer. Organized in a ring with a central cavity.

Its subcellular location is the mitochondrion matrix. It catalyses the reaction Hydrolysis of proteins in presence of ATP.. ATP-dependent serine protease that mediates the selective degradation of misfolded, unassembled or oxidatively damaged polypeptides as well as certain short-lived regulatory proteins in the mitochondrial matrix. May also have a chaperone function in the assembly of inner membrane protein complexes. Participates in the regulation of mitochondrial gene expression and in the maintenance of the integrity of the mitochondrial genome. Binds to mitochondrial DNA in a site-specific manner. The chain is Lon protease homolog, mitochondrial (pim1) from Aspergillus niger (strain ATCC MYA-4892 / CBS 513.88 / FGSC A1513).